Here is a 417-residue protein sequence, read N- to C-terminus: Inhibitor of growth protein 3 (417 aa).

Disordered regions lie at residues 128 to 203 and 286 to 320; these read TPSQ…YNTN and QTLS…SSSS. Over residues 136 to 152 the composition is skewed to basic residues; that stretch reads HHAHSHTPVEKRKHNPS. Over residues 156-168 the composition is skewed to basic and acidic residues; that stretch reads GATDHVPEKKFKS. 3 stretches are compositionally biased toward low complexity: residues 189–203, 286–295, and 307–320; these read NNNS…YNTN, QTLSSSSTDS, and SSSQ…SSSS. The PHD-type zinc-finger motif lies at 359–408; sequence PRYCICNQVSYGEMVGCDNQDCPIEWFHYGCVGLTEAPKGKWYCPQCTAA. Zn(2+) is bound by residues C362, C364, C375, C380, H386, C389, C402, and C405.

Belongs to the ING family. Interacts with H3K4me3 and to a lesser extent with H3K4me2. Component of the NuA4 histone acetyltransferase complex.

Its subcellular location is the nucleus. Component of the NuA4 histone acetyltransferase (HAT) complex which is involved in transcriptional activation of select genes principally by acetylation of nucleosomal histone H4 and H2A. This modification may both alter nucleosome - DNA interactions and promote interaction of the modified histones with other proteins which positively regulate transcription. NuA4 may also play a direct role in DNA repair when directly recruited to sites of DNA damage. The chain is Inhibitor of growth protein 3 (ING3) from Gallus gallus (Chicken).